The primary structure comprises 184 residues: ATP synthase subunit delta (184 aa).

The protein belongs to the ATPase delta chain family. F-type ATPases have 2 components, F(1) - the catalytic core - and F(0) - the membrane proton channel. F(1) has five subunits: alpha(3), beta(3), gamma(1), delta(1), epsilon(1). F(0) has three main subunits: a(1), b(2) and c(10-14). The alpha and beta chains form an alternating ring which encloses part of the gamma chain. F(1) is attached to F(0) by a central stalk formed by the gamma and epsilon chains, while a peripheral stalk is formed by the delta and b chains.

Its subcellular location is the cell inner membrane. F(1)F(0) ATP synthase produces ATP from ADP in the presence of a proton or sodium gradient. F-type ATPases consist of two structural domains, F(1) containing the extramembraneous catalytic core and F(0) containing the membrane proton channel, linked together by a central stalk and a peripheral stalk. During catalysis, ATP synthesis in the catalytic domain of F(1) is coupled via a rotary mechanism of the central stalk subunits to proton translocation. In terms of biological role, this protein is part of the stalk that links CF(0) to CF(1). It either transmits conformational changes from CF(0) to CF(1) or is implicated in proton conduction. In Rhizorhabdus wittichii (strain DSM 6014 / CCUG 31198 / JCM 15750 / NBRC 105917 / EY 4224 / RW1) (Sphingomonas wittichii), this protein is ATP synthase subunit delta.